The following is a 273-amino-acid chain: SPRY domain-containing SOCS box protein 1 (273 aa).

A Phosphotyrosine modification is found at Tyr-31. Positions 33-231 (KPTRLDLLLD…IRMRYLNGLD (199 aa)) constitute a B30.2/SPRY domain. Residues 232–273 (PEPLPLMDLCRRSVRLALGKGRLGEIHALPLPASLKAYLLYQ) form the SOCS box domain.

Belongs to the SPSB family. In terms of assembly, component of the probable ECS(SPSB1) E3 ubiquitin-protein ligase complex which contains CUL5, RNF7/RBX2, Elongin BC complex and SPSB1. Interacts with CUL5, RNF7, ELOB and ELOC. Directly interacts with MET tyrosine kinase domain in the presence and in the absence of HGF, however HGF treatment has a positive effect on this interaction. When phosphorylated, interacts with RASA1 without affecting its stability. Interacts (via B30.2/SPRY domain) with PAWR; this interaction is direct and occurs in association with the Elongin BC complex. Interacts with NOS2 and EPHB2.

Its subcellular location is the cytoplasm. The protein resides in the cytosol. It participates in protein modification; protein ubiquitination. Substrate recognition component of a SCF-like ECS (Elongin BC-CUL2/5-SOCS-box protein) E3 ubiquitin-protein ligase complex which mediates the ubiquitination and subsequent proteasomal degradation of target proteins. Negatively regulates nitric oxide (NO) production and limits cellular toxicity in activated macrophages by mediating the ubiquitination and proteasomal degradation of NOS2. Acts as a bridge which links NOS2 with the ECS E3 ubiquitin ligase complex components ELOC and CUL5. The polypeptide is SPRY domain-containing SOCS box protein 1 (SPSB1) (Bos taurus (Bovine)).